We begin with the raw amino-acid sequence, 439 residues long: C4-dicarboxylate transport protein (439 aa).

9 helical membrane-spanning segments follow: residues 9-29 (SLYA…HFLP), 45-65 (LIKM…IAGM), 77-97 (LALL…LIIV), 145-165 (AFAK…GFAL), 185-205 (VLFT…FGAM), 223-243 (LMGA…GIVT), 290-310 (VVGL…AIYL), 332-352 (TLLA…GSGF), and 353-373 (IVLA…LALI). The interval 417 to 439 (NESPQAADQPEKILDQTNTKLGA) is disordered.

This sequence belongs to the dicarboxylate/amino acid:cation symporter (DAACS) (TC 2.A.23) family.

Its subcellular location is the cell inner membrane. Functionally, responsible for the transport of dicarboxylates such as succinate, fumarate, and malate from the periplasm across the membrane. The sequence is that of C4-dicarboxylate transport protein from Janthinobacterium sp. (strain Marseille) (Minibacterium massiliensis).